The chain runs to 383 residues: Plant intracellular Ras-group-related LRR protein 8 (383 aa).

LRR repeat units follow at residues 56-79 (RQNI…SINL), 80-102 (ASIS…LVAR), 104-126 (LNLW…IGCL), 127-149 (SKLK…IEDC), 151-173 (SLEE…GFEL), 174-197 (TNLT…SYLT), 199-219 (LRVL…LENL), 221-244 (NLQV…VGLL), 245-268 (ISLV…GCLR), and 270-290 (IQKL…VVEQ). The GVYW; degenerate signature appears at 291–298 (GLEALKQY).

It belongs to the SHOC2 family. Widely expressed except flowers.

Leucine-rich repeat protein that likely mediates protein interactions, possibly in the context of signal transduction. The protein is Plant intracellular Ras-group-related LRR protein 8 (PIRL8) of Arabidopsis thaliana (Mouse-ear cress).